The following is a 333-amino-acid chain: Bacteriocin helveticin-J (333 aa).

Functionally, this heat-sensitive bacteriocin inhibits the growth of closely related Lactobacillus species. This is Bacteriocin helveticin-J (hlv) from Lactobacillus helveticus (Lactobacillus suntoryeus).